The chain runs to 222 residues: N-(5'-phosphoribosyl)anthranilate isomerase (222 aa).

Belongs to the TrpF family.

The catalysed reaction is N-(5-phospho-beta-D-ribosyl)anthranilate = 1-(2-carboxyphenylamino)-1-deoxy-D-ribulose 5-phosphate. Its pathway is amino-acid biosynthesis; L-tryptophan biosynthesis; L-tryptophan from chorismate: step 3/5. The protein is N-(5'-phosphoribosyl)anthranilate isomerase of Rhizobium etli (strain ATCC 51251 / DSM 11541 / JCM 21823 / NBRC 15573 / CFN 42).